The chain runs to 332 residues: Acetyl-coenzyme A carboxylase carboxyl transferase subunit alpha (332 aa).

One can recognise a CoA carboxyltransferase C-terminal domain in the interval 44 to 298 (QLESRAQNLR…KETLVNNLEE (255 aa)).

The protein belongs to the AccA family. As to quaternary structure, acetyl-CoA carboxylase is a heterohexamer composed of biotin carboxyl carrier protein (AccB), biotin carboxylase (AccC) and two subunits each of ACCase subunit alpha (AccA) and ACCase subunit beta (AccD).

The protein resides in the cytoplasm. The catalysed reaction is N(6)-carboxybiotinyl-L-lysyl-[protein] + acetyl-CoA = N(6)-biotinyl-L-lysyl-[protein] + malonyl-CoA. The protein operates within lipid metabolism; malonyl-CoA biosynthesis; malonyl-CoA from acetyl-CoA: step 1/1. In terms of biological role, component of the acetyl coenzyme A carboxylase (ACC) complex. First, biotin carboxylase catalyzes the carboxylation of biotin on its carrier protein (BCCP) and then the CO(2) group is transferred by the carboxyltransferase to acetyl-CoA to form malonyl-CoA. This Crocosphaera subtropica (strain ATCC 51142 / BH68) (Cyanothece sp. (strain ATCC 51142)) protein is Acetyl-coenzyme A carboxylase carboxyl transferase subunit alpha.